A 135-amino-acid chain; its full sequence is Small ribosomal subunit protein uS12c (135 aa).

The protein belongs to the universal ribosomal protein uS12 family. Part of the 30S ribosomal subunit.

The protein localises to the plastid. It is found in the chloroplast. In terms of biological role, with S4 and S5 plays an important role in translational accuracy. Located at the interface of the 30S and 50S subunits. This is Small ribosomal subunit protein uS12c (rps12) from Adiantum capillus-veneris (Maidenhair fern).